A 349-amino-acid chain; its full sequence is Guanine nucleotide-binding protein-like alpha-10 subunit (349 aa).

Residues 33 to 349 (EEIRVLIYGQ…LNITYNSVKN (317 aa)) form the G-alpha domain. Positions 36 to 49 (RVLIYGQKKVGVTT) are G1 motif. Positions 168 to 176 (DLNFIKLTQ) are G2 motif. The interval 191-200 (IKMIEMGIQT) is G3 motif. Residues 195 to 199 (EMGIQ) and 266 to 269 (NKKD) each bind GTP. Residues 262 to 269 (IVFFNKKD) are G4 motif. Positions 320-325 (NEESEV) are G5 motif.

It belongs to the G-alpha family.

The polypeptide is Guanine nucleotide-binding protein-like alpha-10 subunit (gpaJ) (Dictyostelium discoideum (Social amoeba)).